The following is a 297-amino-acid chain: Formamidopyrimidine-DNA glycosylase (297 aa).

P2 (schiff-base intermediate with DNA) is an active-site residue. E3 functions as the Proton donor in the catalytic mechanism. The active-site Proton donor; for beta-elimination activity is K58. Positions 104, 127, and 170 each coordinate DNA. An FPG-type zinc finger spans residues 261–297; that stretch reads NVYDREGEACRTPGCTGTVERMTQAGRSTFHCPQCQR. R287 serves as the catalytic Proton donor; for delta-elimination activity.

It belongs to the FPG family. In terms of assembly, monomer. The cofactor is Zn(2+).

The enzyme catalyses Hydrolysis of DNA containing ring-opened 7-methylguanine residues, releasing 2,6-diamino-4-hydroxy-5-(N-methyl)formamidopyrimidine.. It catalyses the reaction 2'-deoxyribonucleotide-(2'-deoxyribose 5'-phosphate)-2'-deoxyribonucleotide-DNA = a 3'-end 2'-deoxyribonucleotide-(2,3-dehydro-2,3-deoxyribose 5'-phosphate)-DNA + a 5'-end 5'-phospho-2'-deoxyribonucleoside-DNA + H(+). Involved in base excision repair of DNA damaged by oxidation or by mutagenic agents. Acts as a DNA glycosylase that recognizes and removes damaged bases. Has a preference for oxidized purines, such as 7,8-dihydro-8-oxoguanine (8-oxoG). Has AP (apurinic/apyrimidinic) lyase activity and introduces nicks in the DNA strand. Cleaves the DNA backbone by beta-delta elimination to generate a single-strand break at the site of the removed base with both 3'- and 5'-phosphates. The polypeptide is Formamidopyrimidine-DNA glycosylase (Allorhizobium ampelinum (strain ATCC BAA-846 / DSM 112012 / S4) (Agrobacterium vitis (strain S4))).